A 218-amino-acid chain; its full sequence is MGQKVNPIGLRIGIIRDWESRWYAEKDYADLLHEDLKVREYINKRLQDAAVSRVEIERAANRVNVTIHTAKPGMVIGKGGSEVEALRKALAQLTGKRVHINIVEIKKPDLDAKLVAENIARQLENRVSFRRAQKQAIQRAMRAGAKGIKTMVSGRLGGADIARSEHYSEGTVPLHTLRADIDYATAEADTTYGKIGVKVWIYRGEVLPTKKKAEEGGK.

One can recognise a KH type-2 domain in the interval 38–106 (VREYINKRLQ…RVHINIVEIK (69 aa)).

This sequence belongs to the universal ribosomal protein uS3 family. Part of the 30S ribosomal subunit. Forms a tight complex with proteins S10 and S14.

In terms of biological role, binds the lower part of the 30S subunit head. Binds mRNA in the 70S ribosome, positioning it for translation. This is Small ribosomal subunit protein uS3 from Geobacillus thermodenitrificans (strain NG80-2).